A 387-amino-acid chain; its full sequence is tRNA-specific 2-thiouridylase MnmA (387 aa).

ATP contacts are provided by residues 34–41 (AMSGGVDS) and Met60. Residue Cys127 is the Nucleophile of the active site. The cysteines at positions 127 and 223 are disulfide-linked. ATP is bound at residue Gly151. Residues 173–175 (KDQ) are interaction with tRNA. Catalysis depends on Cys223, which acts as the Cysteine persulfide intermediate.

This sequence belongs to the MnmA/TRMU family.

It localises to the cytoplasm. The enzyme catalyses S-sulfanyl-L-cysteinyl-[protein] + uridine(34) in tRNA + AH2 + ATP = 2-thiouridine(34) in tRNA + L-cysteinyl-[protein] + A + AMP + diphosphate + H(+). Functionally, catalyzes the 2-thiolation of uridine at the wobble position (U34) of tRNA, leading to the formation of s(2)U34. This Anaplasma marginale (strain St. Maries) protein is tRNA-specific 2-thiouridylase MnmA.